The sequence spans 209 residues: Uracil phosphoribosyltransferase (209 aa).

Residues arginine 79, arginine 104, and 131 to 139 (DPMLATGGS) each bind 5-phospho-alpha-D-ribose 1-diphosphate. Residues isoleucine 194 and 199 to 201 (GDA) each bind uracil. Residue aspartate 200 participates in 5-phospho-alpha-D-ribose 1-diphosphate binding.

This sequence belongs to the UPRTase family. Mg(2+) is required as a cofactor.

The enzyme catalyses UMP + diphosphate = 5-phospho-alpha-D-ribose 1-diphosphate + uracil. Its pathway is pyrimidine metabolism; UMP biosynthesis via salvage pathway; UMP from uracil: step 1/1. Its activity is regulated as follows. Allosterically activated by GTP. Catalyzes the conversion of uracil and 5-phospho-alpha-D-ribose 1-diphosphate (PRPP) to UMP and diphosphate. The sequence is that of Uracil phosphoribosyltransferase from Streptococcus sanguinis (strain SK36).